The chain runs to 399 residues: Chorismate synthase (399 aa).

NADP(+) is bound by residues R40 and R46. FMN is bound by residues R135–S137, Q256–A257, G301, K316–T320, and R342.

Belongs to the chorismate synthase family. Homotetramer. The cofactor is FMNH2.

The catalysed reaction is 5-O-(1-carboxyvinyl)-3-phosphoshikimate = chorismate + phosphate. Its pathway is metabolic intermediate biosynthesis; chorismate biosynthesis; chorismate from D-erythrose 4-phosphate and phosphoenolpyruvate: step 7/7. In terms of biological role, catalyzes the anti-1,4-elimination of the C-3 phosphate and the C-6 proR hydrogen from 5-enolpyruvylshikimate-3-phosphate (EPSP) to yield chorismate, which is the branch point compound that serves as the starting substrate for the three terminal pathways of aromatic amino acid biosynthesis. This reaction introduces a second double bond into the aromatic ring system. This is Chorismate synthase from Pseudarthrobacter chlorophenolicus (strain ATCC 700700 / DSM 12829 / CIP 107037 / JCM 12360 / KCTC 9906 / NCIMB 13794 / A6) (Arthrobacter chlorophenolicus).